The primary structure comprises 327 residues: Serine/threonine-protein phosphatase PP1-beta catalytic subunit (327 aa).

Ala2 is modified (N-acetylalanine). Mn(2+) is bound by residues Asp63, His65, Asp91, and Asn123. The active-site Proton donor is His124. Residues His172 and His247 each coordinate Mn(2+). Residues Gln305 to Arg327 form a disordered region.

This sequence belongs to the PPP phosphatase family. PP-1 subfamily. Requires Mn(2+) as cofactor.

It is found in the cytoplasm. The protein localises to the nucleus. It carries out the reaction O-phospho-L-seryl-[protein] + H2O = L-seryl-[protein] + phosphate. The enzyme catalyses O-phospho-L-threonyl-[protein] + H2O = L-threonyl-[protein] + phosphate. In terms of biological role, protein phosphatase that associates with over 200 regulatory proteins to form highly specific holoenzymes which dephosphorylate hundreds of biological targets. Protein phosphatase (PP1) is essential for cell division, it participates in the regulation of glycogen metabolism, muscle contractility and protein synthesis. Involved in regulation of ionic conductances and long-term synaptic plasticity. The protein is Serine/threonine-protein phosphatase PP1-beta catalytic subunit (ppp1cb) of Xenopus laevis (African clawed frog).